The primary structure comprises 649 residues: Protein WHI4 (649 aa).

2 positions are modified to phosphoserine: serine 22 and serine 206. Disordered stretches follow at residues 196-217 and 228-247; these read EHVS…SSAQ and ISYG…KPRP. A compositionally biased stretch (polar residues) spans 228 to 238; sequence ISYGKTSSSPL. A phosphoserine mark is found at serine 258 and serine 283. 2 disordered regions span residues 438 to 461 and 604 to 649; these read LDLN…SIFN and QLPH…YGKS. The RRM domain maps to 533–625; the sequence is NTLYVGNLPP…GGIRLSFSKN (93 aa). Residues 631–649 show a composition bias toward polar residues; that stretch reads GSNSRSKSGYSFNGSYGKS.

Post-translationally, phosphorylated by PKA in vitro.

The protein resides in the cytoplasm. In terms of biological role, has a partially redundant function to WHI3, a dosage-dependent modulator of cell size. This is Protein WHI4 (WHI4) from Saccharomyces cerevisiae (strain ATCC 204508 / S288c) (Baker's yeast).